The primary structure comprises 472 residues: MSRTAPHRRAPKRYKTPPPAPAHVVTGNEPVIEIISLDMEARGVGRTETEDGTPGKVIFVEGVLPGERVSYSTHRSKPKFEQAEVVQVLRESVMRTKPKCTYFDICGGCSMQHLDIRAQVAVKQRVLEDNLQHLAKLRPETVFRPIHGPSWGYRYRARLAVRFLPEKGGMRIGFHEKKSSYIADMKTCEVLPPHVSAMLMPLRFMVRKLSIYDRMPQLELAVGSSVTALVVRNLEPITAADEQVLRDFADEHKVQFWLQPGGPDTVTPFYPLDVQLDYTLPEYGIRMPFKPTDFTQVNHAINRVLVSRALRLLAPARTDRVLDLFCGIGNFTLPLARISKEVMGIEGSEVLTSRALANAGLNGVAGHTSFECRNLFEVTADDLRALGHFDKFLIDPPREGALAVAKALAEIARSGNGPLPKRIVYVSCAPATLARDAGLLVHEAGYRLVGAGVVNMFPHTSHVESIALFERD.

Over residues 1–15 (MSRTAPHRRAPKRYK) the composition is skewed to basic residues. Residues 1–23 (MSRTAPHRRAPKRYKTPPPAPAH) form a disordered region. One can recognise a TRAM domain in the interval 23-87 (HVVTGNEPVI…PKFEQAEVVQ (65 aa)). Residues C100, C106, C109, and C188 each contribute to the [4Fe-4S] cluster site. S-adenosyl-L-methionine is bound by residues Q296, F325, N330, E346, N374, and D395. C428 acts as the Nucleophile in catalysis.

This sequence belongs to the class I-like SAM-binding methyltransferase superfamily. RNA M5U methyltransferase family. RlmD subfamily.

The enzyme catalyses uridine(1939) in 23S rRNA + S-adenosyl-L-methionine = 5-methyluridine(1939) in 23S rRNA + S-adenosyl-L-homocysteine + H(+). Catalyzes the formation of 5-methyl-uridine at position 1939 (m5U1939) in 23S rRNA. This Paraburkholderia xenovorans (strain LB400) protein is 23S rRNA (uracil(1939)-C(5))-methyltransferase RlmD.